The following is an 88-amino-acid chain: Small ribosomal subunit protein bS20 (88 aa).

The tract at residues 1–28 (MANTVQARKRARQAVKQNEHNSSLRSKL) is disordered.

It belongs to the bacterial ribosomal protein bS20 family.

Functionally, binds directly to 16S ribosomal RNA. The sequence is that of Small ribosomal subunit protein bS20 from Polynucleobacter necessarius subsp. necessarius (strain STIR1).